Reading from the N-terminus, the 209-residue chain is Mitochondrial import inner membrane translocase subunit Tim23 (209 aa).

Helical transmembrane passes span 73–93 (FELA…FGAL), 125–145 (ALWA…GVIV), and 180–200 (GGLA…WEHI).

Belongs to the Tim17/Tim22/Tim23 family. As to quaternary structure, component of the TIM23 complex at least composed of timm23, timm17 and timm50. The complex interacts with the timm44 component of the PAM complex.

The protein localises to the mitochondrion inner membrane. Essential component of the TIM23 complex, a complex that mediates the translocation of transit peptide-containing proteins across the mitochondrial inner membrane. The chain is Mitochondrial import inner membrane translocase subunit Tim23 (timm23) from Xenopus laevis (African clawed frog).